A 619-amino-acid polypeptide reads, in one-letter code: 2-isopropylmalate synthase (619 aa).

The Pyruvate carboxyltransferase domain occupies 61–336; the sequence is PRWLSTDLRD…SPNLDFSDLT (276 aa). A divalent metal cation contacts are provided by Asp70, His275, His277, and Asn311.

It belongs to the alpha-IPM synthase/homocitrate synthase family. LeuA type 2 subfamily. As to quaternary structure, homodimer. A divalent metal cation serves as cofactor.

Its subcellular location is the cytoplasm. The protein localises to the mitochondrion. The enzyme catalyses 3-methyl-2-oxobutanoate + acetyl-CoA + H2O = (2S)-2-isopropylmalate + CoA + H(+). The protein operates within amino-acid biosynthesis; L-leucine biosynthesis; L-leucine from 3-methyl-2-oxobutanoate: step 1/4. In terms of biological role, catalyzes the condensation of the acetyl group of acetyl-CoA with 3-methyl-2-oxobutanoate (2-oxoisovalerate) to form 3-carboxy-3-hydroxy-4-methylpentanoate (2-isopropylmalate). The chain is 2-isopropylmalate synthase (LEU4) from Saccharomyces cerevisiae (strain ATCC 204508 / S288c) (Baker's yeast).